Consider the following 147-residue polypeptide: Deoxyuridine 5'-triphosphate nucleotidohydrolase (147 aa).

Residues 67 to 69 (RSG), Asn-80, and 84 to 86 (LID) contribute to the substrate site.

This sequence belongs to the dUTPase family. Requires Mg(2+) as cofactor.

The enzyme catalyses dUTP + H2O = dUMP + diphosphate + H(+). The protein operates within pyrimidine metabolism; dUMP biosynthesis; dUMP from dCTP (dUTP route): step 2/2. This enzyme is involved in nucleotide metabolism: it produces dUMP, the immediate precursor of thymidine nucleotides and it decreases the intracellular concentration of dUTP so that uracil cannot be incorporated into DNA. This chain is Deoxyuridine 5'-triphosphate nucleotidohydrolase, found in Gloeobacter violaceus (strain ATCC 29082 / PCC 7421).